The primary structure comprises 496 residues: L-arabinose isomerase (496 aa).

The Mn(2+) site is built by Glu305, Glu330, His347, and His446.

It belongs to the arabinose isomerase family. Mn(2+) serves as cofactor.

It carries out the reaction beta-L-arabinopyranose = L-ribulose. It participates in carbohydrate degradation; L-arabinose degradation via L-ribulose; D-xylulose 5-phosphate from L-arabinose (bacterial route): step 1/3. Functionally, catalyzes the conversion of L-arabinose to L-ribulose. The sequence is that of L-arabinose isomerase from Bacillus subtilis (strain 168).